We begin with the raw amino-acid sequence, 304 residues long: UDP-3-O-acyl-N-acetylglucosamine deacetylase (304 aa).

The Zn(2+) site is built by H78, H237, and D241. H264 (proton donor) is an active-site residue.

This sequence belongs to the LpxC family. The cofactor is Zn(2+).

It catalyses the reaction a UDP-3-O-[(3R)-3-hydroxyacyl]-N-acetyl-alpha-D-glucosamine + H2O = a UDP-3-O-[(3R)-3-hydroxyacyl]-alpha-D-glucosamine + acetate. Its pathway is glycolipid biosynthesis; lipid IV(A) biosynthesis; lipid IV(A) from (3R)-3-hydroxytetradecanoyl-[acyl-carrier-protein] and UDP-N-acetyl-alpha-D-glucosamine: step 2/6. Its function is as follows. Catalyzes the hydrolysis of UDP-3-O-myristoyl-N-acetylglucosamine to form UDP-3-O-myristoylglucosamine and acetate, the committed step in lipid A biosynthesis. The chain is UDP-3-O-acyl-N-acetylglucosamine deacetylase from Xylella fastidiosa (strain Temecula1 / ATCC 700964).